Here is a 359-residue protein sequence, read N- to C-terminus: Outer membrane protein A (359 aa).

A signal peptide spans 1 to 21 (MKKTAIALAVALAGFATVAQA). The next 8 membrane-spanning stretches (beta stranded) occupy residues 27 to 37 (TWYTGAKLGWS), 62 to 73 (QLGAGAFLGYQA), 77 to 85 (LGFELGYDW), 103 to 114 (QGVQLAAKLSYP), 119 to 127 (LDIYTRLGG), 154 to 163 (PLAAVGVEYA), 168 to 175 (WATRLDYQ), and 194 to 202 (MLSLGVSYR). 5 tandem repeats follow at residues 210-211 (AP), 212-213 (AP), 214-215 (AP), 216-217 (AP), and 218-219 (AP). A 5 X 2 AA tandem repeats of A-P region spans residues 210-219 (APAPAPAPAP). In terms of domain architecture, OmpA-like spans 221–351 (VETKRFTLKS…RVEIEVKGIK (131 aa)). Residues C322 and C336 are joined by a disulfide bond.

Belongs to the outer membrane OOP (TC 1.B.6) superfamily. OmpA family. As to quaternary structure, monomer and homodimer.

It localises to the cell outer membrane. Functionally, with TolR probably plays a role in maintaining the position of the peptidoglycan cell wall in the periplasm. Acts as a porin with low permeability that allows slow penetration of small solutes; an internal gate slows down solute passage. The polypeptide is Outer membrane protein A (Serratia marcescens).